Reading from the N-terminus, the 20-residue chain is ATP synthase subunit beta, chloroplastic (20 aa).

Positions 1 to 10 (METTNESLGY) are enriched in polar residues. A disordered region spans residues 1–20 (METTNESLGYTDQIIGPVLD).

It belongs to the ATPase alpha/beta chains family. F-type ATPases have 2 components, CF(1) - the catalytic core - and CF(0) - the membrane proton channel. CF(1) has five subunits: alpha(3), beta(3), gamma(1), delta(1), epsilon(1). CF(0) has four main subunits: a(1), b(1), b'(1) and c(9-12).

Its subcellular location is the plastid. The protein resides in the chloroplast thylakoid membrane. The enzyme catalyses ATP + H2O + 4 H(+)(in) = ADP + phosphate + 5 H(+)(out). In terms of biological role, produces ATP from ADP in the presence of a proton gradient across the membrane. The catalytic sites are hosted primarily by the beta subunits. The sequence is that of ATP synthase subunit beta, chloroplastic from Chattonella marina var. antiqua (Red tide flagellate).